A 176-amino-acid chain; its full sequence is Peptide methionine sulfoxide reductase MsrA (176 aa).

The active site involves Cys-12.

The protein belongs to the MsrA Met sulfoxide reductase family.

It carries out the reaction L-methionyl-[protein] + [thioredoxin]-disulfide + H2O = L-methionyl-(S)-S-oxide-[protein] + [thioredoxin]-dithiol. It catalyses the reaction [thioredoxin]-disulfide + L-methionine + H2O = L-methionine (S)-S-oxide + [thioredoxin]-dithiol. In terms of biological role, has an important function as a repair enzyme for proteins that have been inactivated by oxidation. Catalyzes the reversible oxidation-reduction of methionine sulfoxide in proteins to methionine. This chain is Peptide methionine sulfoxide reductase MsrA, found in Thermus thermophilus (strain ATCC 27634 / DSM 579 / HB8).